Here is a 430-residue protein sequence, read N- to C-terminus: MVNAVVTTPSRVESLAKSGIQAIPKEYVRPQEELNGIGNIFEEEKKDEGPQVPTIDLKEIDSEDKEIREKCHQLKKAAMEWGVMHLVNHGISDELINRVKVAGETFFDQPVEEKEKYANDQANGNVQGYGSKLANSACGQLEWEDYFFHCAFPEDKRDLSIWPKNPTDYTPATSEYAKQIRALATKILTVLSIGLGLEEGRLEKEVGGMEDLLLQMKINYYPKCPQPELALGVEAHTDVSALTFILHNMVPGLQLFYEGQWVTAKCVPNSIIMHIGDTIEILSNGKYKSILHRGVVNKEKVRFSWAIFCEPPKEKIILKPLPETVTEAEPPRFPPRTFAQHMAHKLFRKDDKDAAVEHKVFNEDELDTAAEHKVLKKDNQDAVAENKDIKEDEQCGPAEHKDIKEDGQGAAAENKVFKENNQDVAAEESK.

One can recognise a Fe2OG dioxygenase domain in the interval 212-311 (LLLQMKINYY…RFSWAIFCEP (100 aa)). Fe cation-binding residues include His-236, Asp-238, and His-292. Composition is skewed to basic and acidic residues over residues 376–407 (KKDNQDAVAENKDIKEDEQCGPAEHKDIKEDG) and 415–430 (KVFKENNQDVAAEESK). The disordered stretch occupies residues 376–430 (KKDNQDAVAENKDIKEDEQCGPAEHKDIKEDGQGAAAENKVFKENNQDVAAEESK).

Belongs to the iron/ascorbate-dependent oxidoreductase family. Fe cation is required as a cofactor. L-ascorbate serves as cofactor. Predominantly expressed in corollas and at lower levels in anthers.

The enzyme catalyses a (2R,3S,4S)-leucoanthocyanidin + 2-oxoglutarate + O2 = a 4-H-anthocyanidin with a 3-hydroxy group + succinate + CO2 + 2 H2O. It participates in pigment biosynthesis; anthocyanin biosynthesis. Functionally, oxidation of leucoanthocyanidins into anthocyanidins. In Petunia hybrida (Petunia), this protein is Leucoanthocyanidin dioxygenase (ANT17).